The following is a 323-amino-acid chain: tRNA dimethylallyltransferase (323 aa).

18–25 (GPTASGKS) lines the ATP pocket. 20–25 (TASGKS) is a substrate binding site. 3 interaction with substrate tRNA regions span residues 43-46 (DSAQ), 167-171 (QRIQR), and 249-254 (RCVGYR).

It belongs to the IPP transferase family. As to quaternary structure, monomer. Mg(2+) is required as a cofactor.

The catalysed reaction is adenosine(37) in tRNA + dimethylallyl diphosphate = N(6)-dimethylallyladenosine(37) in tRNA + diphosphate. Catalyzes the transfer of a dimethylallyl group onto the adenine at position 37 in tRNAs that read codons beginning with uridine, leading to the formation of N6-(dimethylallyl)adenosine (i(6)A). This chain is tRNA dimethylallyltransferase, found in Nitrosospira multiformis (strain ATCC 25196 / NCIMB 11849 / C 71).